The following is a 326-amino-acid chain: GTPase Obg (326 aa).

The Obg domain occupies 1–159; sequence MKFVDSAKIY…LEIELELKLM (159 aa). The segment at 119 to 138 is disordered; sequence EGGKGGKGNPHFASSTRQAP. In terms of domain architecture, OBG-type G spans 160 to 323; it reads ADVGLVGFPN…LKDELWSRVK (164 aa). GTP-binding positions include 166-173, 191-195, 213-216, 280-283, and 304-306; these read GFPNAGKS, FTTLV, DIPG, TKMD, and SSV. The Mg(2+) site is built by Ser173 and Thr193.

Belongs to the TRAFAC class OBG-HflX-like GTPase superfamily. OBG GTPase family. In terms of assembly, monomer. The cofactor is Mg(2+).

The protein resides in the cytoplasm. In terms of biological role, an essential GTPase which binds GTP, GDP and possibly (p)ppGpp with moderate affinity, with high nucleotide exchange rates and a fairly low GTP hydrolysis rate. Plays a role in control of the cell cycle, stress response, ribosome biogenesis and in those bacteria that undergo differentiation, in morphogenesis control. This Chlorobium phaeobacteroides (strain BS1) protein is GTPase Obg.